A 125-amino-acid polypeptide reads, in one-letter code: Small ribosomal subunit protein uS13 (125 aa).

The interval 93–125 (RKGLPVRGQRTKTNARTRKGPKRTVAGKKKAGR) is disordered.

This sequence belongs to the universal ribosomal protein uS13 family. As to quaternary structure, part of the 30S ribosomal subunit. Forms a loose heterodimer with protein S19. Forms two bridges to the 50S subunit in the 70S ribosome.

Its function is as follows. Located at the top of the head of the 30S subunit, it contacts several helices of the 16S rRNA. In the 70S ribosome it contacts the 23S rRNA (bridge B1a) and protein L5 of the 50S subunit (bridge B1b), connecting the 2 subunits; these bridges are implicated in subunit movement. Contacts the tRNAs in the A and P-sites. The sequence is that of Small ribosomal subunit protein uS13 from Arthrobacter sp. (strain FB24).